The primary structure comprises 876 residues: Phosphoenolpyruvate carboxylase (876 aa).

Active-site residues include His-138 and Lys-543.

It belongs to the PEPCase type 1 family. Requires Mg(2+) as cofactor.

The catalysed reaction is oxaloacetate + phosphate = phosphoenolpyruvate + hydrogencarbonate. Functionally, forms oxaloacetate, a four-carbon dicarboxylic acid source for the tricarboxylic acid cycle. This is Phosphoenolpyruvate carboxylase from Vibrio atlanticus (strain LGP32) (Vibrio splendidus (strain Mel32)).